The sequence spans 556 residues: Formate--tetrahydrofolate ligase (556 aa).

65–72 (TPAGEGKS) provides a ligand contact to ATP.

Belongs to the formate--tetrahydrofolate ligase family.

The enzyme catalyses (6S)-5,6,7,8-tetrahydrofolate + formate + ATP = (6R)-10-formyltetrahydrofolate + ADP + phosphate. The protein operates within one-carbon metabolism; tetrahydrofolate interconversion. This is Formate--tetrahydrofolate ligase from Clostridium perfringens (strain ATCC 13124 / DSM 756 / JCM 1290 / NCIMB 6125 / NCTC 8237 / Type A).